The chain runs to 133 residues: Probable non-specific lipid-transfer protein 2 (133 aa).

The N-terminal stretch at 1–31 (MRTVSMAALVVIAAALAWTSSAELASAPAPG) is a signal peptide. Cystine bridges form between C35–C83, C45–C60, C61–C106, and C81–C121.

The protein belongs to the plant LTP family.

Plant non-specific lipid-transfer proteins transfer phospholipids as well as galactolipids across membranes. May play a role in wax or cutin deposition in the cell walls of expanding epidermal cells and certain secretory tissues. The sequence is that of Probable non-specific lipid-transfer protein 2 from Parietaria judaica (Pellitory-of-the-wall).